Consider the following 501-residue polypeptide: Aldehyde dehydrogenase 1A1 (501 aa).

N-acetylserine is present on Ser2. Residues Lys91 and Lys128 each carry the N6-acetyllysine modification. NAD(+) is bound by residues 167 to 170, 193 to 196, 226 to 227, and 246 to 247; these read IPWN, KPAE, GP, and GS. Lys252 carries the N6-acetyllysine modification. The Proton acceptor role is filled by Glu269. Position 269 to 271 (269 to 271) interacts with NAD(+); it reads ELG. The active-site Nucleophile is Cys303. The mediates interaction with PRMT3 stretch occupies residues 336–501; sequence LNSGINQGPQ…VAIKISQKNS (166 aa). 349–353 serves as a coordination point for NAD(+); that stretch reads EQHDK. An N6-acetyllysine mark is found at Lys353 and Lys367. An NAD(+)-binding site is contributed by 400–402; the sequence is EIF. At Lys410 the chain carries N6-acetyllysine. Phosphoserine is present on Ser413. 3 positions are modified to N6-acetyllysine: Lys419, Lys435, and Lys495.

It belongs to the aldehyde dehydrogenase family. As to quaternary structure, homotetramer. Interacts with PRMT3; the interaction is direct, inhibits ALDH1A1 aldehyde dehydrogenase activity and is independent of the methyltransferase activity of PRMT3. Post-translationally, the N-terminus is blocked most probably by acetylation.

The protein localises to the cytoplasm. It is found in the cytosol. The protein resides in the cell projection. It localises to the axon. The catalysed reaction is an aldehyde + NAD(+) + H2O = a carboxylate + NADH + 2 H(+). The enzyme catalyses all-trans-retinal + NAD(+) + H2O = all-trans-retinoate + NADH + 2 H(+). It carries out the reaction 9-cis-retinal + NAD(+) + H2O = 9-cis-retinoate + NADH + 2 H(+). It catalyses the reaction 11-cis-retinal + NAD(+) + H2O = 11-cis-retinoate + NADH + 2 H(+). The catalysed reaction is 13-cis-retinal + NAD(+) + H2O = 13-cis-retinoate + NADH + 2 H(+). The enzyme catalyses 3-deoxyglucosone + NAD(+) + H2O = 2-dehydro-3-deoxy-D-gluconate + NADH + 2 H(+). It carries out the reaction (E)-4-hydroxynon-2-enal + NAD(+) + H2O = (E)-4-hydroxynon-2-enoate + NADH + 2 H(+). It catalyses the reaction malonaldehyde + NAD(+) + H2O = 3-oxopropanoate + NADH + 2 H(+). The catalysed reaction is hexanal + NAD(+) + H2O = hexanoate + NADH + 2 H(+). The enzyme catalyses propanal + NAD(+) + H2O = propanoate + NADH + 2 H(+). It carries out the reaction acetaldehyde + NAD(+) + H2O = acetate + NADH + 2 H(+). It catalyses the reaction benzaldehyde + NAD(+) + H2O = benzoate + NADH + 2 H(+). The catalysed reaction is 4-aminobutanal + NAD(+) + H2O = 4-aminobutanoate + NADH + 2 H(+). The protein operates within cofactor metabolism; retinol metabolism. Functionally, cytosolic dehydrogenase that catalyzes the irreversible oxidation of a wide range of aldehydes to their corresponding carboxylic acid. Functions downstream of retinol dehydrogenases and catalyzes the oxidation of retinaldehyde into retinoic acid, the second step in the oxidation of retinol/vitamin A into retinoic acid. This pathway is crucial to control the levels of retinol and retinoic acid, two important molecules which excess can be teratogenic and cytotoxic. Also oxidizes aldehydes resulting from lipid peroxidation like (E)-4-hydroxynon-2-enal/HNE, malonaldehyde and hexanal that form protein adducts and are highly cytotoxic. By participating for instance to the clearance of (E)-4-hydroxynon-2-enal/HNE in the lens epithelium prevents the formation of HNE-protein adducts and lens opacification. Also functions downstream of fructosamine-3-kinase in the fructosamine degradation pathway by catalyzing the oxidation of 3-deoxyglucosone, the carbohydrate product of fructosamine 3-phosphate decomposition, which is itself a potent glycating agent that may react with lysine and arginine side-chains of proteins. Also has an aminobutyraldehyde dehydrogenase activity and is probably part of an alternative pathway for the biosynthesis of GABA/4-aminobutanoate in midbrain, thereby playing a role in GABAergic synaptic transmission. The polypeptide is Aldehyde dehydrogenase 1A1 (Mesocricetus auratus (Golden hamster)).